Reading from the N-terminus, the 1039-residue chain is Integrin alpha-IIb (1039 aa).

The signal sequence occupies residues 1–31; the sequence is MARALCPLQALWLLEWVLLLLGPCAAPPAWA. The Extracellular segment spans residues 32–993; it reads LNLDPVQLTF…TQLLRALEER (962 aa). FG-GAP repeat units lie at residues 35–96, 110–173, 187–238, 251–305, 306–371, 373–432, and 435–496; these read DPVQ…GGQC, VGSQ…RRAE, VEND…FSSY, SLSF…DSYY, QRLH…PHAL, APSL…GLRS, and SQVL…VQDS. N46 carries an N-linked (GlcNAc...) asparagine glycan. 3 cysteine pairs are disulfide-bonded: C87/C96, C138/C161, and C177/C198. 3 residues coordinate Ca(2+): E274, D276, and D278. N280 carries N-linked (GlcNAc...) asparagine glycosylation. Residues T281, E283, D328, N330, D332, R334, D336, D396, D398, D400, Y402, D404, D457, D459, N461, Y463, and D465 each coordinate Ca(2+). Cystine bridges form between C504-C515 and C521-C576. An N-linked (GlcNAc...) asparagine glycan is attached at N601. 4 disulfides stabilise this stretch: C633–C639, C705–C718, C857–C921, and C911–C916. The N-linked (GlcNAc...) asparagine glycan is linked to N711. A glycan (O-linked (GalNAc...) serine; in variant S-874) is linked at I874. The O-linked (GalNAc...) serine glycan is linked to S878. Position 891 is a pyrrolidone carboxylic acid; in light chain form 1 (Q891). A glycan (N-linked (GlcNAc...) asparagine) is linked at N962. The helical transmembrane segment at 994 to 1019 threads the bilayer; it reads AIPIWWVLVGVLGGLLLLTILVLAMW. Residues 1020–1039 are Cytoplasmic-facing; the sequence is KVGFFKRNRPPLEEDDEEGE. Positions 1022 to 1026 match the GFFKR motif motif; sequence GFFKR.

This sequence belongs to the integrin alpha chain family. Heterodimer of an alpha and a beta subunit. The alpha subunit is composed of a heavy and a light chain linked by a disulfide bond. Alpha-IIb associates with beta-3. Directly interacts with RNF181. Interacts (via C-terminus cytoplasmic tail region) with CIB1; the interaction is direct and calcium-dependent. Interacts (via C-terminus cytoplasmic tail region) with CIB2, CIB3 and CIB4; the interactions are stabilized/increased in a calcium and magnesium-dependent manner. ITGA2B:ITGB3 interacts with PPIA/CYPA; the interaction is ROS and PPIase activity-dependent and is increased in the presence of thrombin. ITGA2B:ITGB3 interacts with SELP (via C-type lectin domain); the interaction mediates cell-cell interaction and adhesion. In terms of processing, cleaved by ELANE; the cleavage promotes activation of platelet fibrinogen receptor integrin alpha-IIb/beta-3. As to expression, isoform 1 and isoform 2 are expressed in platelets and megakaryocytes, but not in reticulocytes. Not detected in Jurkat, nor in U937 cell lines. Isoform 3 is expressed in prostate adenocarcinoma, as well as in several erythroleukemia, prostate adenocarcinoma and melanoma cell lines, including PC-3, DU-145, HEL, WM983A, WM983B and WM35. Not detected in platelets, nor in normal prostate (at protein level).

Its subcellular location is the membrane. In terms of biological role, integrin alpha-IIb/beta-3 is a receptor for fibronectin, fibrinogen, plasminogen, prothrombin, thrombospondin and vitronectin. It recognizes the sequence R-G-D in a wide array of ligands. It recognizes the sequence H-H-L-G-G-G-A-K-Q-A-G-D-V in fibrinogen gamma chain. Following activation integrin alpha-IIb/beta-3 brings about platelet/platelet interaction through binding of soluble fibrinogen. This step leads to rapid platelet aggregation which physically plugs ruptured endothelial cell surface. In Homo sapiens (Human), this protein is Integrin alpha-IIb (ITGA2B).